A 416-amino-acid polypeptide reads, in one-letter code: Glutamyl-tRNA reductase (416 aa).

Residues 50 to 53 (TCNR), Ser-109, 114 to 116 (EPQ), and Gln-120 each bind substrate. Cys-51 (nucleophile) is an active-site residue. 189–194 (GAGEMI) is an NADP(+) binding site.

It belongs to the glutamyl-tRNA reductase family. As to quaternary structure, homodimer.

It catalyses the reaction (S)-4-amino-5-oxopentanoate + tRNA(Glu) + NADP(+) = L-glutamyl-tRNA(Glu) + NADPH + H(+). It functions in the pathway porphyrin-containing compound metabolism; protoporphyrin-IX biosynthesis; 5-aminolevulinate from L-glutamyl-tRNA(Glu): step 1/2. Functionally, catalyzes the NADPH-dependent reduction of glutamyl-tRNA(Glu) to glutamate 1-semialdehyde (GSA). In Vesicomyosocius okutanii subsp. Calyptogena okutanii (strain HA), this protein is Glutamyl-tRNA reductase.